Here is a 59-residue protein sequence, read N- to C-terminus: Large ribosomal subunit protein bL32 (59 aa).

Residues 1-15 (MAVPKKKTSKSKRDM) show a composition bias toward basic residues. Residues 1-26 (MAVPKKKTSKSKRDMRRATWNRKAAA) are disordered.

Belongs to the bacterial ribosomal protein bL32 family.

The protein is Large ribosomal subunit protein bL32 of Cyanothece sp. (strain PCC 7425 / ATCC 29141).